The primary structure comprises 301 residues: Sulfate adenylyltransferase subunit 2 (301 aa).

The protein belongs to the PAPS reductase family. CysD subfamily. In terms of assembly, heterodimer composed of CysD, the smaller subunit, and CysN.

It carries out the reaction sulfate + ATP + H(+) = adenosine 5'-phosphosulfate + diphosphate. The protein operates within sulfur metabolism; hydrogen sulfide biosynthesis; sulfite from sulfate: step 1/3. Functionally, with CysN forms the ATP sulfurylase (ATPS) that catalyzes the adenylation of sulfate producing adenosine 5'-phosphosulfate (APS) and diphosphate, the first enzymatic step in sulfur assimilation pathway. APS synthesis involves the formation of a high-energy phosphoric-sulfuric acid anhydride bond driven by GTP hydrolysis by CysN coupled to ATP hydrolysis by CysD. The polypeptide is Sulfate adenylyltransferase subunit 2 (Trichlorobacter lovleyi (strain ATCC BAA-1151 / DSM 17278 / SZ) (Geobacter lovleyi)).